A 293-amino-acid polypeptide reads, in one-letter code: MLKGSIVALITPMNRDGSVDNASLERLVEFHINQGTDAIVAVGTTGESSTLAQSEHIAVVEQVVSFAAGRIAVIAGNGANATAHGVELTQKLAKTGVDAMLGVTPYYNKPSPKGIIAHYTAIANSTDIAQILYNVPGRTCLDMQPEVIAELAKVSNIIGVKEATGDVSRVAKLRALCGDDFLLYSGDDASAKDFLLLGGDGVISVANNIVPKAFKVMCDAALSGNAELAKIHDDTLRGLYGSLFCEANPIPVKWASHQLGLITNAYIRLPLTELSEQFHGLLLETMKQAQLKV.

Threonine 45 serves as a coordination point for pyruvate. The Proton donor/acceptor role is filled by tyrosine 133. Residue lysine 161 is the Schiff-base intermediate with substrate of the active site. Isoleucine 203 contacts pyruvate.

It belongs to the DapA family. In terms of assembly, homotetramer; dimer of dimers.

It is found in the cytoplasm. It carries out the reaction L-aspartate 4-semialdehyde + pyruvate = (2S,4S)-4-hydroxy-2,3,4,5-tetrahydrodipicolinate + H2O + H(+). The protein operates within amino-acid biosynthesis; L-lysine biosynthesis via DAP pathway; (S)-tetrahydrodipicolinate from L-aspartate: step 3/4. Its function is as follows. Catalyzes the condensation of (S)-aspartate-beta-semialdehyde [(S)-ASA] and pyruvate to 4-hydroxy-tetrahydrodipicolinate (HTPA). The polypeptide is 4-hydroxy-tetrahydrodipicolinate synthase (Shewanella denitrificans (strain OS217 / ATCC BAA-1090 / DSM 15013)).